Here is a 328-residue protein sequence, read N- to C-terminus: 4-hydroxy-3-methylbut-2-enyl diphosphate reductase (328 aa).

Residue Cys-13 coordinates [4Fe-4S] cluster. 2 residues coordinate (2E)-4-hydroxy-3-methylbut-2-enyl diphosphate: His-41 and His-75. His-41 and His-75 together coordinate dimethylallyl diphosphate. Isopentenyl diphosphate is bound by residues His-41 and His-75. Cys-97 provides a ligand contact to [4Fe-4S] cluster. Residue His-125 coordinates (2E)-4-hydroxy-3-methylbut-2-enyl diphosphate. His-125 contacts dimethylallyl diphosphate. Residue His-125 coordinates isopentenyl diphosphate. The Proton donor role is filled by Glu-127. Thr-168 lines the (2E)-4-hydroxy-3-methylbut-2-enyl diphosphate pocket. Residue Cys-229 participates in [4Fe-4S] cluster binding. Residues Ser-257, Ser-258, Asn-259, and Ser-306 each contribute to the (2E)-4-hydroxy-3-methylbut-2-enyl diphosphate site. Ser-257, Ser-258, Asn-259, and Ser-306 together coordinate dimethylallyl diphosphate. Ser-257, Ser-258, Asn-259, and Ser-306 together coordinate isopentenyl diphosphate.

The protein belongs to the IspH family. [4Fe-4S] cluster serves as cofactor.

It catalyses the reaction isopentenyl diphosphate + 2 oxidized [2Fe-2S]-[ferredoxin] + H2O = (2E)-4-hydroxy-3-methylbut-2-enyl diphosphate + 2 reduced [2Fe-2S]-[ferredoxin] + 2 H(+). The catalysed reaction is dimethylallyl diphosphate + 2 oxidized [2Fe-2S]-[ferredoxin] + H2O = (2E)-4-hydroxy-3-methylbut-2-enyl diphosphate + 2 reduced [2Fe-2S]-[ferredoxin] + 2 H(+). The protein operates within isoprenoid biosynthesis; dimethylallyl diphosphate biosynthesis; dimethylallyl diphosphate from (2E)-4-hydroxy-3-methylbutenyl diphosphate: step 1/1. It participates in isoprenoid biosynthesis; isopentenyl diphosphate biosynthesis via DXP pathway; isopentenyl diphosphate from 1-deoxy-D-xylulose 5-phosphate: step 6/6. Its function is as follows. Catalyzes the conversion of 1-hydroxy-2-methyl-2-(E)-butenyl 4-diphosphate (HMBPP) into a mixture of isopentenyl diphosphate (IPP) and dimethylallyl diphosphate (DMAPP). Acts in the terminal step of the DOXP/MEP pathway for isoprenoid precursor biosynthesis. The protein is 4-hydroxy-3-methylbut-2-enyl diphosphate reductase of Chlorobium phaeobacteroides (strain DSM 266 / SMG 266 / 2430).